The following is a 331-amino-acid chain: MKQIVYVASPESQQIHVWQMDNQGALTLLQVVDTPGQGQPMVIHPARTHLYIGVRPSFGVVSYRIDEKGLLTEAGMAPLPGSPTQLTTDLQGETLYSVSYSGSCLSVSPIDEQGIVGAPTQTLEGLTHCHSANVDTTNQVLWVPCLQEDRIRLYTIGEAGHLTPRTPEALDSVAGAGPRHMVFHHGGGYAYAINELSGTVNVIAIDAAGAGPRIVQTLDIMPAGFSDTRWAADIYITPDGRWLYCCDRTASVISRFAVSEDGGVLRLLGHQATESQPRGFNIDSQGRFLVAAGQKSHHIAVYAIDAQSGALDPLARYAVGQGPMWVSVLAR.

The protein belongs to the cycloisomerase 2 family.

The catalysed reaction is 6-phospho-D-glucono-1,5-lactone + H2O = 6-phospho-D-gluconate + H(+). The protein operates within carbohydrate degradation; pentose phosphate pathway; D-ribulose 5-phosphate from D-glucose 6-phosphate (oxidative stage): step 2/3. Functionally, catalyzes the hydrolysis of 6-phosphogluconolactone to 6-phosphogluconate. The protein is 6-phosphogluconolactonase of Sodalis glossinidius (strain morsitans).